The following is a 463-amino-acid chain: 23S rRNA (uracil(1939)-C(5))-methyltransferase RlmD (463 aa).

One can recognise a TRAM domain in the interval 6 to 76; the sequence is KSRKPQQPEY…KRLEEAEMVA (71 aa). [4Fe-4S] cluster-binding residues include C90, C96, C99, and C178. Residues Q288, F317, N322, E341, D368, and D389 each coordinate S-adenosyl-L-methionine. C415 acts as the Nucleophile in catalysis.

Belongs to the class I-like SAM-binding methyltransferase superfamily. RNA M5U methyltransferase family. RlmD subfamily.

The enzyme catalyses uridine(1939) in 23S rRNA + S-adenosyl-L-methionine = 5-methyluridine(1939) in 23S rRNA + S-adenosyl-L-homocysteine + H(+). Its function is as follows. Catalyzes the formation of 5-methyl-uridine at position 1939 (m5U1939) in 23S rRNA. The chain is 23S rRNA (uracil(1939)-C(5))-methyltransferase RlmD from Acinetobacter baumannii (strain SDF).